The primary structure comprises 358 residues: 3-isopropylmalate dehydrogenase (358 aa).

77–90 is a binding site for NAD(+); that stretch reads GPKWTNLPPDQQPE. Arg-98, Arg-108, Arg-137, and Asp-226 together coordinate substrate. The Mg(2+) site is built by Asp-226, Asp-250, and Asp-254. 284 to 296 serves as a coordination point for NAD(+); that stretch reads GSAPDIAGKGIAN.

The protein belongs to the isocitrate and isopropylmalate dehydrogenases family. LeuB type 1 subfamily. Homodimer. Mg(2+) serves as cofactor. It depends on Mn(2+) as a cofactor.

The protein localises to the cytoplasm. The catalysed reaction is (2R,3S)-3-isopropylmalate + NAD(+) = 4-methyl-2-oxopentanoate + CO2 + NADH. Its pathway is amino-acid biosynthesis; L-leucine biosynthesis; L-leucine from 3-methyl-2-oxobutanoate: step 3/4. In terms of biological role, catalyzes the oxidation of 3-carboxy-2-hydroxy-4-methylpentanoate (3-isopropylmalate) to 3-carboxy-4-methyl-2-oxopentanoate. The product decarboxylates to 4-methyl-2 oxopentanoate. The chain is 3-isopropylmalate dehydrogenase from Haemophilus influenzae (strain 86-028NP).